The chain runs to 282 residues: MSRQTATALPTGTSKCPPSQRVPALTGTTASNNDLASLFECPVCFDYVLPPILQCQSGHLVCSNCRPKLTCCPTCRGPLGSIRNLAMEKVANSVLFPCKYASSGCEITLPHTEKADHEELCEFRPYSCPCPGASCKWQGSLDAVMPHLMHQHKSITTLQGEDIVFLATDINLPGAVDWVMMQSCFGFHFMLVLEKQEKYDGHQQFFAIVQLIGTRKQAENFAYRLELNGHRRRLTWEATPRSIHEGIATAIMNSDCLVFDTSIAQLFAENGNLGINVTISMC.

Over residues 1 to 17 (MSRQTATALPTGTSKCP) the composition is skewed to polar residues. Positions 1–22 (MSRQTATALPTGTSKCPPSQRV) are disordered. Serine 19 carries the phosphoserine; by ATM and ATR modification. The RING-type zinc-finger motif lies at 41 to 76 (CPVCFDYVLPPILQCQSGHLVCSNCRPKLTCCPTCR). The tract at residues 90 to 282 (VANSVLFPCK…LGINVTISMC (193 aa)) is SBD. An SIAH-type zinc finger spans residues 93 to 153 (SVLFPCKYAS…VMPHLMHQHK (61 aa)). Residues cysteine 98, cysteine 105, histidine 117, cysteine 121, cysteine 128, cysteine 135, histidine 147, and histidine 152 each contribute to the Zn(2+) site.

Belongs to the SINA (Seven in absentia) family. Homodimer. Interacts with group 1 glutamate receptors GRM1 and GRM5. Interacts with DAB1, which may inhibit its activity. Interacts with UBE2E2. Interacts with PEG3. Interacts with GAPDH; leading to stabilize SIAH1. Component of some large E3 complex composed of UBE2D1, SIAH1, CACYBP/SIP, SKP1, APC and TBL1X. Interacts with UBE2I. Interacts with alpha-tubulin. Interacts with PEG10, which may inhibit its activity. Interacts with KHDRBS3. Interacts with SNCAIP. Interacts with HIPK2; the interaction is promoted by DAZAP2 and results in SIAH1-mediated ubiquitination and subsequent proteasomal degradation of HIPK2. Interacts with DAZAP2; the interaction is decreased following phosphorylation of DAZAP2 by HIPK2. Interacts with Bassoon/BSN and Piccolo/PLCO; these interactions negatively regulate SIAH1 E3 ligase activity. Interacts with DCC. Interacts with AXIN1; catalyzes AXIN1 ubiquitination and subsequent proteasome-mediated ubiquitin-dependent degradation. Post-translationally, phosphorylated on Ser-19 by ATM and ATR. This phosphorylation disrupts SIAH1 interaction with HIPK2, and subsequent proteasomal degradation of HIPK2. Widely expressed at a low level. Down-regulated in advanced hepatocellular carcinomas.

The protein localises to the cytoplasm. Its subcellular location is the nucleus. It catalyses the reaction S-ubiquitinyl-[E2 ubiquitin-conjugating enzyme]-L-cysteine + [acceptor protein]-L-lysine = [E2 ubiquitin-conjugating enzyme]-L-cysteine + N(6)-ubiquitinyl-[acceptor protein]-L-lysine.. It participates in protein modification; protein ubiquitination. With respect to regulation, inhibited by interaction with SNCAIP (isoform 2, but not isoform 1). May be inhibited by interaction with PEG10. Functionally, E3 ubiquitin-protein ligase that mediates ubiquitination and subsequent proteasomal degradation of target proteins. E3 ubiquitin ligases accept ubiquitin from an E2 ubiquitin-conjugating enzyme in the form of a thioester and then directly transfers the ubiquitin to targeted substrates. Mediates E3 ubiquitin ligase activity either through direct binding to substrates or by functioning as the essential RING domain subunit of larger E3 complexes. Triggers the ubiquitin-mediated degradation of many substrates, including proteins involved in transcription regulation (ELL2, MYB, POU2AF1, PML and RBBP8), a cell surface receptor (DCC), the cell-surface receptor-type tyrosine kinase FLT3, the cytoplasmic signal transduction molecules (KLF10/TIEG1 and NUMB), an antiapoptotic protein (BAG1), a microtubule motor protein (KIF22), a protein involved in synaptic vesicle function in neurons (SYP), a structural protein (CTNNB1) and SNCAIP. Confers constitutive instability to HIPK2 through proteasomal degradation. It is thereby involved in many cellular processes such as apoptosis, tumor suppression, cell cycle, axon guidance, transcription regulation, spermatogenesis and TNF-alpha signaling. Has some overlapping function with SIAH2. Induces apoptosis in cooperation with PEG3. Upon nitric oxid (NO) generation that follows apoptotic stimulation, interacts with S-nitrosylated GAPDH, mediating the translocation of GAPDH to the nucleus. GAPDH acts as a stabilizer of SIAH1, facilitating the degradation of nuclear proteins. Mediates ubiquitination and degradation of EGLN2 and EGLN3 in response to the unfolded protein response (UPR), leading to their degradation and subsequent stabilization of ATF4. Also part of the Wnt signaling pathway in which it mediates the Wnt-induced ubiquitin-mediated proteasomal degradation of AXIN1. The protein is E3 ubiquitin-protein ligase SIAH1 (SIAH1) of Homo sapiens (Human).